We begin with the raw amino-acid sequence, 397 residues long: Phosphoglycerate kinase (397 aa).

Residues 21–23 (DFN), R36, 59–62 (HCGR), R118, and R151 contribute to the substrate site. Residues K201, E323, and 353–356 (GGDT) contribute to the ATP site.

The protein belongs to the phosphoglycerate kinase family. In terms of assembly, monomer.

It is found in the cytoplasm. The catalysed reaction is (2R)-3-phosphoglycerate + ATP = (2R)-3-phospho-glyceroyl phosphate + ADP. Its pathway is carbohydrate degradation; glycolysis; pyruvate from D-glyceraldehyde 3-phosphate: step 2/5. This Bartonella henselae (strain ATCC 49882 / DSM 28221 / CCUG 30454 / Houston 1) (Rochalimaea henselae) protein is Phosphoglycerate kinase.